A 228-amino-acid chain; its full sequence is CMRF-35-like molecule 4 (228 aa).

Positions Met1–Pro24 are cleaved as a signal peptide. In terms of domain architecture, Ig-like V-type spans Leu25–Tyr126. The Extracellular segment spans residues Leu25–Tyr187. A disulfide bridge links Cys43 with Cys110. Asn90 carries N-linked (GlcNAc...) asparagine glycosylation. A disordered region spans residues Pro139–Ala174. Residues Ser154–Asp170 show a composition bias toward polar residues. The chain crosses the membrane as a helical span at residues Phe188–Trp208. Over Val209–Gln228 the chain is Cytoplasmic.

Belongs to the CD300 family. As to quaternary structure, interacts with TYROBP, HCST and FcR gamma. Present on the surface of mast cells, dendritic cells, peritoneal macrophages and a subset of B-cells (at protein level).

Its subcellular location is the cell membrane. In terms of biological role, acts as an activating receptor in mast cells and macrophages. This is CMRF-35-like molecule 4 from Mus musculus (Mouse).